The primary structure comprises 419 residues: Haloacid dehalogenase-like hydrolase domain-containing 5 (419 aa).

An N-terminal signal peptide occupies residues 1–15 (MAALAGLGVLGAGRH).

Belongs to the HAD-like hydrolase superfamily.

The polypeptide is Haloacid dehalogenase-like hydrolase domain-containing 5 (Mus musculus (Mouse)).